Reading from the N-terminus, the 71-residue chain is Pro-glucagon (71 aa).

This sequence belongs to the glucagon family.

Its subcellular location is the secreted. Plays a key role in glucose metabolism and homeostasis. Regulates blood glucose by increasing gluconeogenesis and decreasing glycolysis. In Ictalurus punctatus (Channel catfish), this protein is Pro-glucagon (gcg).